The following is a 118-amino-acid chain: Large ribosomal subunit protein uL24 (118 aa).

This sequence belongs to the universal ribosomal protein uL24 family. Part of the 50S ribosomal subunit.

Functionally, one of two assembly initiator proteins, it binds directly to the 5'-end of the 23S rRNA, where it nucleates assembly of the 50S subunit. One of the proteins that surrounds the polypeptide exit tunnel on the outside of the subunit. The polypeptide is Large ribosomal subunit protein uL24 (Synechococcus sp. (strain WH7803)).